The sequence spans 169 residues: MRVSVFAVGRMKSGPKRELVERYFDRFAKAGPPLGLEFAGVSEIPESRGQTAQLRKAEEAQRIHEALDNAKSGGTSSGGAALILLDERGKALGSEAFAAIVGRMRDDGKRQLIVAIGGPDGHDPALRSRADLVLALGELTWPHQIARILIAEQLYRAATILAGHPYHRS.

S-adenosyl-L-methionine contacts are provided by residues leucine 85, glycine 117, and 136–141 (LGELTW).

Belongs to the RNA methyltransferase RlmH family. As to quaternary structure, homodimer.

It localises to the cytoplasm. It carries out the reaction pseudouridine(1915) in 23S rRNA + S-adenosyl-L-methionine = N(3)-methylpseudouridine(1915) in 23S rRNA + S-adenosyl-L-homocysteine + H(+). Its function is as follows. Specifically methylates the pseudouridine at position 1915 (m3Psi1915) in 23S rRNA. The chain is Ribosomal RNA large subunit methyltransferase H from Brucella ovis (strain ATCC 25840 / 63/290 / NCTC 10512).